The primary structure comprises 500 residues: uncharacterized protein (500 aa).

A helical transmembrane segment spans residues 27-47 (IFALILIVFGFIIAPLLPGIF).

It localises to the membrane. This is an uncharacterized protein from Borreliella burgdorferi (strain ATCC 35210 / DSM 4680 / CIP 102532 / B31) (Borrelia burgdorferi).